The primary structure comprises 524 residues: uncharacterized protein (524 aa).

The span at 83–101 (NSTPSKQAKPLQRNSPYQG) shows a compositional bias: polar residues. Disordered regions lie at residues 83-108 (NSTP…SENQ) and 155-179 (PPCN…KRPR).

It is found in the cytoplasm. This is an uncharacterized protein from Saccharomyces cerevisiae (strain ATCC 204508 / S288c) (Baker's yeast).